A 442-amino-acid chain; its full sequence is tRNA-2-methylthio-N(6)-dimethylallyladenosine synthase (442 aa).

An MTTase N-terminal domain is found at 6–122 (RKFYIHTFGC…LPALIAEAGD (117 aa)). Residues Cys15, Cys51, Cys85, Cys157, Cys161, and Cys164 each coordinate [4Fe-4S] cluster. The 231-residue stretch at 143–373 (RTQSLNAFVP…IDLQNGISAE (231 aa)) folds into the Radical SAM core domain. The TRAM domain maps to 376 to 439 (GLAPGSVVEV…SATLFGQSAE (64 aa)).

It belongs to the methylthiotransferase family. MiaB subfamily. As to quaternary structure, monomer. Requires [4Fe-4S] cluster as cofactor.

The protein localises to the cytoplasm. It catalyses the reaction N(6)-dimethylallyladenosine(37) in tRNA + (sulfur carrier)-SH + AH2 + 2 S-adenosyl-L-methionine = 2-methylsulfanyl-N(6)-dimethylallyladenosine(37) in tRNA + (sulfur carrier)-H + 5'-deoxyadenosine + L-methionine + A + S-adenosyl-L-homocysteine + 2 H(+). Catalyzes the methylthiolation of N6-(dimethylallyl)adenosine (i(6)A), leading to the formation of 2-methylthio-N6-(dimethylallyl)adenosine (ms(2)i(6)A) at position 37 in tRNAs that read codons beginning with uridine. This chain is tRNA-2-methylthio-N(6)-dimethylallyladenosine synthase, found in Chlorobium phaeobacteroides (strain DSM 266 / SMG 266 / 2430).